A 215-amino-acid polypeptide reads, in one-letter code: Ribonuclease HII (215 aa).

The RNase H type-2 domain occupies 24–215 (GVVFGVDEVG…PIRQFYENVD (192 aa)). The a divalent metal cation site is built by Asp-30, Glu-31, and Asp-125.

Belongs to the RNase HII family. Requires Mn(2+) as cofactor. Mg(2+) serves as cofactor.

The protein resides in the cytoplasm. The enzyme catalyses Endonucleolytic cleavage to 5'-phosphomonoester.. In terms of biological role, endonuclease that specifically degrades the RNA of RNA-DNA hybrids. This Zymomonas mobilis subsp. mobilis (strain ATCC 31821 / ZM4 / CP4) protein is Ribonuclease HII.